We begin with the raw amino-acid sequence, 372 residues long: GDSL esterase/lipase At5g45910 (372 aa).

The first 19 residues, 1–19 (MRINMLFIVAFSFLVSVRS), serve as a signal peptide directing secretion. Ser-37 (nucleophile) is an active-site residue. N-linked (GlcNAc...) asparagine glycans are attached at residues Asn-66, Asn-101, and Asn-137. Residues Asp-345 and His-348 contribute to the active site.

It belongs to the 'GDSL' lipolytic enzyme family.

It is found in the secreted. This Arabidopsis thaliana (Mouse-ear cress) protein is GDSL esterase/lipase At5g45910.